The sequence spans 90 residues: Neuropeptide-like 3 (90 aa).

The N-terminal stretch at 1-16 (MFKLCVFVALLSLAAA) is a signal peptide. 2 propeptides span residues 17–54 (APAP…LAPQ) and 67–79 (AITQ…LLIK). At I89 the chain carries Isoleucine amide.

It localises to the secreted. This Drosophila melanogaster (Fruit fly) protein is Neuropeptide-like 3 (Nplp3).